A 265-amino-acid polypeptide reads, in one-letter code: Probable U2 small nuclear ribonucleoprotein A' (265 aa).

LRR repeat units follow at residues Arg20–Leu41, Gln43–Pro64, Arg65–Ala86, and Asn89–Val110. The LRRCT domain occupies Asn123–Phe161.

It belongs to the U2 small nuclear ribonucleoprotein A family. In terms of assembly, interacts with the SMN complex.

The protein resides in the nucleus. Functionally, involved in pre-mRNA splicing as component of the spliceosome. Associated with sn-RNP U2, where it contributes to the binding of stem loop IV of U2 snRNA. In the germ line, has a role in oogenesis, by regulating spermatogenesis and nurse cell nuclei chromatin decondensation and dispersal, probably by regulating the splicing of proteins necessary for germline differentiation such as the meiotic protein mei-P26. The sequence is that of Probable U2 small nuclear ribonucleoprotein A' (U2A) from Drosophila melanogaster (Fruit fly).